The following is a 125-amino-acid chain: MAIAKEDILEAVGAMSVLELNELVKAFEEKFGVSAAAVAVAGPAGAGGGAAAAEEQTEFTVILSEAGANKVSVIKAVRELTGLGLKEAKDLVDGAPKPVKEAVPKAAAEEAKKKLEEAGAKAEIK.

It belongs to the bacterial ribosomal protein bL12 family. As to quaternary structure, homodimer. Part of the ribosomal stalk of the 50S ribosomal subunit. Forms a multimeric L10(L12)X complex, where L10 forms an elongated spine to which 2 to 4 L12 dimers bind in a sequential fashion. Binds GTP-bound translation factors.

Its function is as follows. Forms part of the ribosomal stalk which helps the ribosome interact with GTP-bound translation factors. Is thus essential for accurate translation. In Paraburkholderia phymatum (strain DSM 17167 / CIP 108236 / LMG 21445 / STM815) (Burkholderia phymatum), this protein is Large ribosomal subunit protein bL12.